The following is a 2924-amino-acid chain: Probable polyketide synthase 6 (2924 aa).

The 432-residue stretch at 11–442 folds into the Ketosynthase family 3 (KS3) domain; that stretch reads EKGVAIVGIG…GSNCCLLISE (432 aa). Active-site for beta-ketoacyl synthase activity residues include Cys181, His323, and His362. The segment at 635 to 668 is acyl/malonyl transferase; sequence GVNPSFILGHSLGEISASYCSGMIDLDTFCYTVY. Ser645 serves as the catalytic For acyl/malonyl transferase activity. The tract at residues 925-1047 is N-terminal hotdog fold; sequence IDHLGLSNSY…SNFQLLDHGN (123 aa). The PKS/mFAS DH domain maps to 925–1210; that stretch reads IDHLGLSNSY…CKSLIPIKDS (286 aa). His959 (proton acceptor; for dehydratase activity) is an active-site residue. The segment at 1064-1210 is C-terminal hotdog fold; sequence NLSKLTKNEL…CKSLIPIKDS (147 aa). Asp1122 functions as the Proton donor; for dehydratase activity in the catalytic mechanism. Residues 2431–2508 form the Carrier domain; the sequence is TGNKNIDELF…ISIKMILNSL (78 aa). Position 2468 is an O-(pantetheine 4'-phosphoryl)serine (Ser2468). The chain crosses the membrane as a helical span at residues 2551-2571; the sequence is KIILLTGTTGFLGGFLLFNML.

The cofactor is pantetheine 4'-phosphate.

The protein localises to the membrane. Functionally, probable polyketide synthase. The sequence is that of Probable polyketide synthase 6 (pks6) from Dictyostelium discoideum (Social amoeba).